Reading from the N-terminus, the 239-residue chain is Lactate utilization protein A (239 aa).

This sequence belongs to the LutA/YkgE family.

Functionally, is involved in L-lactate degradation and allows cells to grow with lactate as the sole carbon source. This is Lactate utilization protein A from Bacillus cereus (strain B4264).